A 469-amino-acid chain; its full sequence is MFLPRPDFRIALSICFMAVSFVISRFGSEVRPTLLLALPLVLGHVSTGLIGFVLNVIAGHHSTVTLAASTIGTALLWLPMLVPMGTLISLTVLVSQLHGAERERDIGPLFRQALWLAMLLGLVMFTFLSVVPALLPLFGIVPDIVPGAAKFLHVVRWGSLAFPLYFCMRYFCEGMHCTFPTMLLGFGGLLVLVPLSYALTYGRFGFAEYGVEGLGIATVTVMWLQAVVFALYLWRSRRFAHLQLFAHLELPCWARIRDLLNIGLPIGISILMEGGLFIVTTLLIGRFGTDEIAAHQIALSVAQLCFMIPMGVAEATTVRIGHAVGRCDLLVMRRVAWAGYAIVIGTQTLSASVLLLGYDVIVAAYTDDLVVASLASKLLLFAAIFQFPDGLQMLSSGVLRGMKDTRVPMLLAMISYWGLGMPLGLGLGFALEWNSRGMWIGLIIGLTAAALLLGWRFRVVSERMFAGIP.

12 helical membrane-spanning segments follow: residues 10–30 (IALS…GSEV), 34–54 (LLLA…GFVL), 74–94 (ALLW…TVLV), 121–141 (GLVM…FGIV), 179–199 (FPTM…SYAL), 214–234 (LGIA…LYLW), 264–284 (LPIG…TLLI), 292–312 (IAAH…PMGV), 335–355 (VAWA…SVLL), 369–389 (LVVA…QFPD), 409–429 (MLLA…GLGF), and 437–457 (GMWI…GWRF).

The protein belongs to the multi antimicrobial extrusion (MATE) (TC 2.A.66.1) family.

The protein resides in the cell inner membrane. Its function is as follows. Multidrug efflux pump. The protein is Probable multidrug resistance protein NorM (norM) of Xylella fastidiosa (strain Temecula1 / ATCC 700964).